A 276-amino-acid polypeptide reads, in one-letter code: Acetyl-coenzyme A carboxylase carboxyl transferase subunit beta (276 aa).

Residues 24 to 276 (LWRECSNCHE…NNLLNLHSDK (253 aa)) form the CoA carboxyltransferase N-terminal domain. Zn(2+) contacts are provided by cysteine 28, cysteine 31, cysteine 46, and cysteine 49. The C4-type zinc finger occupies 28–49 (CSNCHEKFYYRRAGVYEVCPNC).

Belongs to the AccD/PCCB family. As to quaternary structure, acetyl-CoA carboxylase is a heterohexamer composed of biotin carboxyl carrier protein (AccB), biotin carboxylase (AccC) and two subunits each of ACCase subunit alpha (AccA) and ACCase subunit beta (AccD). Requires Zn(2+) as cofactor.

It is found in the cytoplasm. The catalysed reaction is N(6)-carboxybiotinyl-L-lysyl-[protein] + acetyl-CoA = N(6)-biotinyl-L-lysyl-[protein] + malonyl-CoA. The protein operates within lipid metabolism; malonyl-CoA biosynthesis; malonyl-CoA from acetyl-CoA: step 1/1. Its function is as follows. Component of the acetyl coenzyme A carboxylase (ACC) complex. Biotin carboxylase (BC) catalyzes the carboxylation of biotin on its carrier protein (BCCP) and then the CO(2) group is transferred by the transcarboxylase to acetyl-CoA to form malonyl-CoA. This chain is Acetyl-coenzyme A carboxylase carboxyl transferase subunit beta, found in Pediococcus pentosaceus (strain ATCC 25745 / CCUG 21536 / LMG 10740 / 183-1w).